The primary structure comprises 714 residues: SEC14 domain and spectrin repeat-containing protein 1 (714 aa).

The CRAL-TRIO domain occupies 1–153 (MEASCILPVL…EFGGSLLYDH (153 aa)). 3 Spectrin repeats span residues 275–381 (SQLE…NVLQ), 384–497 (YEFH…LKML), and 503–605 (FKCE…HRLE). The segment at 691-714 (EAEQRLEEEEEEEEAALEVEPRES) is disordered. A compositionally biased stretch (acidic residues) spans 696 to 707 (LEEEEEEEEAAL).

Belongs to the SOLO family.

May act as the primary docking protein directing membrane turnover and assembly of the transient receptor potential channels trpc4 and trpc5. Binds phospholipids. The sequence is that of SEC14 domain and spectrin repeat-containing protein 1 (sestd1) from Danio rerio (Zebrafish).